The following is a 205-amino-acid chain: Small ribosomal subunit protein uS4 (205 aa).

Residues 91–149 (MRLDALVLRAAFARSISQARQLVVHRHILVDGKLVDRPSYSVSPGQTVKVKPKSVPLDP) enclose the S4 RNA-binding domain.

The protein belongs to the universal ribosomal protein uS4 family. In terms of assembly, part of the 30S ribosomal subunit. Contacts protein S5. The interaction surface between S4 and S5 is involved in control of translational fidelity.

Functionally, one of the primary rRNA binding proteins, it binds directly to 16S rRNA where it nucleates assembly of the body of the 30S subunit. Its function is as follows. With S5 and S12 plays an important role in translational accuracy. This is Small ribosomal subunit protein uS4 from Tropheryma whipplei (strain TW08/27) (Whipple's bacillus).